We begin with the raw amino-acid sequence, 216 residues long: Adenylate kinase (216 aa).

11–16 (GSGKGT) is an ATP binding site. Residues 31–60 (ATGDLFRKAIECGDELGDTVKSYMERGELV) are NMP. AMP-binding positions include Thr32, Arg37, 58–60 (ELV), 86–89 (GFPR), and Gln93. Positions 127 to 163 (GRWVCRSCQSPYQSGCAEVTKGKCSRCQGGLYQRPDD) are LID. Arg128 lines the ATP pocket. Zn(2+)-binding residues include Cys131, Cys134, Cys150, and Cys153. Residues Arg160 and Arg171 each contribute to the AMP site. Ala199 is an ATP binding site.

Belongs to the adenylate kinase family. As to quaternary structure, monomer.

It localises to the cytoplasm. It carries out the reaction AMP + ATP = 2 ADP. It participates in purine metabolism; AMP biosynthesis via salvage pathway; AMP from ADP: step 1/1. Its function is as follows. Catalyzes the reversible transfer of the terminal phosphate group between ATP and AMP. Plays an important role in cellular energy homeostasis and in adenine nucleotide metabolism. The chain is Adenylate kinase from Dehalococcoides mccartyi (strain CBDB1).